Consider the following 300-residue polypeptide: Folate-binding protein 1 (300 aa).

The N-terminal stretch at 1 to 28 is a signal peptide; sequence MGRCLTKKVFLIQSPILFLHLLISLSSG. 5 disulfide bridges follow: Cys-38–Cys-76, Cys-68–Cys-111, Cys-77–Cys-114, Cys-102–Cys-139, and Cys-132–Cys-178. Residue Asn-173 is glycosylated (N-linked (GlcNAc...) asparagine). Residues 238-258 traverse the membrane as a helical segment; the sequence is MTTIQKISLGMSFLIAGMFLI.

It belongs to the folate receptor family. As to expression, expressed in leaves.

The protein localises to the membrane. In terms of biological role, folic acid-binding protein involved in salicylic acid- (SA-) induced folate accumulation by triggering uptake and accumulation of folic acid in cells. May be implicated in the transport of the folates from the site of production (leaves) to the site of storage (fruits and seeds) and utilization (roots). In Arabidopsis thaliana (Mouse-ear cress), this protein is Folate-binding protein 1.